The sequence spans 260 residues: NH(3)-dependent NAD(+) synthetase (260 aa).

31–38 (GLSGGLDS) lines the ATP pocket. D37 contacts Mg(2+). R112 is a binding site for deamido-NAD(+). T132 serves as a coordination point for ATP. Residue E137 coordinates Mg(2+). ATP contacts are provided by K161 and S183.

It belongs to the NAD synthetase family. In terms of assembly, homodimer.

It carries out the reaction deamido-NAD(+) + NH4(+) + ATP = AMP + diphosphate + NAD(+) + H(+). The protein operates within cofactor biosynthesis; NAD(+) biosynthesis; NAD(+) from deamido-NAD(+) (ammonia route): step 1/1. Catalyzes the ATP-dependent amidation of deamido-NAD to form NAD. Uses ammonia as a nitrogen source. This chain is NH(3)-dependent NAD(+) synthetase, found in Helicobacter pylori (strain ATCC 700392 / 26695) (Campylobacter pylori).